Reading from the N-terminus, the 297-residue chain is Protein LRATD1 (297 aa).

Serine 38 is modified (phosphoserine). In terms of domain architecture, LRAT spans 138–233; that stretch reads PAPEPPAPAP…CRFGKREFKA (96 aa).

It belongs to the LRATD family.

The protein resides in the cytoplasm. May play a role in cell morphology and motility. This Bos taurus (Bovine) protein is Protein LRATD1 (LRATD1).